Reading from the N-terminus, the 335-residue chain is Acetyl-coenzyme A carboxylase carboxyl transferase subunit alpha (335 aa).

One can recognise a CoA carboxyltransferase C-terminal domain in the interval 48 to 308 (TLEKKVEALR…KGILIEELSA (261 aa)).

The protein belongs to the AccA family. As to quaternary structure, acetyl-CoA carboxylase is a heterohexamer composed of biotin carboxyl carrier protein (AccB), biotin carboxylase (AccC) and two subunits each of ACCase subunit alpha (AccA) and ACCase subunit beta (AccD).

The protein localises to the cytoplasm. It catalyses the reaction N(6)-carboxybiotinyl-L-lysyl-[protein] + acetyl-CoA = N(6)-biotinyl-L-lysyl-[protein] + malonyl-CoA. The protein operates within lipid metabolism; malonyl-CoA biosynthesis; malonyl-CoA from acetyl-CoA: step 1/1. Component of the acetyl coenzyme A carboxylase (ACC) complex. First, biotin carboxylase catalyzes the carboxylation of biotin on its carrier protein (BCCP) and then the CO(2) group is transferred by the carboxyltransferase to acetyl-CoA to form malonyl-CoA. This is Acetyl-coenzyme A carboxylase carboxyl transferase subunit alpha from Chlorobium phaeovibrioides (strain DSM 265 / 1930) (Prosthecochloris vibrioformis (strain DSM 265)).